A 405-amino-acid chain; its full sequence is GTPase Obg (405 aa).

One can recognise an Obg domain in the interval 1–159; it reads MKFVDEVSIF…RDLKLELKVL (159 aa). The tract at residues 127 to 148 is disordered; the sequence is NTRFKSSTNRAPRQTTPGKPGD. Residues 129-143 show a composition bias toward polar residues; the sequence is RFKSSTNRAPRQTTP. The OBG-type G domain occupies 160–333; it reads ADVGLLGLPN…LSQAIMRYLD (174 aa). Residues 166 to 173, 191 to 195, 213 to 216, 283 to 286, and 314 to 316 each bind GTP; these read GLPNAGKS, FTTLV, DIPG, NKAD, and SAL. Positions 173 and 193 each coordinate Mg(2+). The tract at residues 373–405 is disordered; the sequence is LRRAGVKSVEEADDDDFDDDDDDEGGAEIIYVR. Over residues 383 to 398 the composition is skewed to acidic residues; it reads EADDDDFDDDDDDEGG.

This sequence belongs to the TRAFAC class OBG-HflX-like GTPase superfamily. OBG GTPase family. As to quaternary structure, monomer. Mg(2+) is required as a cofactor.

Its subcellular location is the cytoplasm. Its function is as follows. An essential GTPase which binds GTP, GDP and possibly (p)ppGpp with moderate affinity, with high nucleotide exchange rates and a fairly low GTP hydrolysis rate. Plays a role in control of the cell cycle, stress response, ribosome biogenesis and in those bacteria that undergo differentiation, in morphogenesis control. The sequence is that of GTPase Obg from Stutzerimonas stutzeri (strain A1501) (Pseudomonas stutzeri).